The chain runs to 256 residues: Pyridoxine 5'-phosphate synthase (256 aa).

3-amino-2-oxopropyl phosphate is bound by residues N8 and R19. Residue H44 is the Proton acceptor of the active site. 2 residues coordinate 1-deoxy-D-xylulose 5-phosphate: R46 and H51. The Proton acceptor role is filled by E74. T111 lines the 1-deoxy-D-xylulose 5-phosphate pocket. H202 functions as the Proton donor in the catalytic mechanism. 3-amino-2-oxopropyl phosphate is bound by residues D203 and 225–226; that span reads GH.

This sequence belongs to the PNP synthase family. In terms of assembly, homooctamer; tetramer of dimers.

The protein localises to the cytoplasm. It carries out the reaction 3-amino-2-oxopropyl phosphate + 1-deoxy-D-xylulose 5-phosphate = pyridoxine 5'-phosphate + phosphate + 2 H2O + H(+). Its pathway is cofactor biosynthesis; pyridoxine 5'-phosphate biosynthesis; pyridoxine 5'-phosphate from D-erythrose 4-phosphate: step 5/5. Functionally, catalyzes the complicated ring closure reaction between the two acyclic compounds 1-deoxy-D-xylulose-5-phosphate (DXP) and 3-amino-2-oxopropyl phosphate (1-amino-acetone-3-phosphate or AAP) to form pyridoxine 5'-phosphate (PNP) and inorganic phosphate. The chain is Pyridoxine 5'-phosphate synthase from Xanthomonas campestris pv. campestris (strain 8004).